Here is a 525-residue protein sequence, read N- to C-terminus: GMP synthase [glutamine-hydrolyzing] (525 aa).

In terms of domain architecture, Glutamine amidotransferase type-1 spans 9–207; the sequence is RILILDFGSQ…ILDICECEAL (199 aa). The active-site Nucleophile is Cys-86. Catalysis depends on residues His-181 and Glu-183. In terms of domain architecture, GMPS ATP-PPase spans 208-400; that stretch reads WTPSKIAEDA…LGLPYDMVYR (193 aa). 235–241 provides a ligand contact to ATP; sequence SGGVDSS.

In terms of assembly, homodimer.

It carries out the reaction XMP + L-glutamine + ATP + H2O = GMP + L-glutamate + AMP + diphosphate + 2 H(+). The protein operates within purine metabolism; GMP biosynthesis; GMP from XMP (L-Gln route): step 1/1. In terms of biological role, catalyzes the synthesis of GMP from XMP. The polypeptide is GMP synthase [glutamine-hydrolyzing] (Pseudomonas fluorescens (strain SBW25)).